Here is a 443-residue protein sequence, read N- to C-terminus: Mitochondrial enolase superfamily member 1 (443 aa).

Residues 24–26 and tyrosine 34 contribute to the substrate site; that span reads GSD. Serine 148 is subject to Phosphoserine. Lysine 220 is a substrate binding site. Lysine 222 serves as the catalytic Proton donor/acceptor. Position 250 (aspartate 250) interacts with Mg(2+). Substrate is bound by residues asparagine 252, glutamate 276, glutamate 305, 355–357, and glutamate 386; that span reads HAG. Glutamate 276 and glutamate 305 together coordinate Mg(2+). Histidine 355 is a catalytic residue.

It belongs to the mandelate racemase/muconate lactonizing enzyme family. ENOSF1 subfamily. Requires Mg(2+) as cofactor. In terms of processing, could be sumoylated.

Its subcellular location is the mitochondrion. The enzyme catalyses L-fuconate = 2-dehydro-3-deoxy-L-fuconate + H2O. Its function is as follows. Plays a role in the catabolism of L-fucose, a sugar that is part of the carbohydrates that are attached to cellular glycoproteins. Catalyzes the dehydration of L-fuconate to 2-keto-3-deoxy-L-fuconate by the abstraction of the 2-proton to generate an enediolate intermediate that is stabilized by the magnesium ion. May down-regulate thymidylate synthase activity, possibly already at the RNA level, by promoting the degradation of TYMS mRNA via an antisense RNA-based mechanism. The sequence is that of Mitochondrial enolase superfamily member 1 (ENOSF1) from Bos taurus (Bovine).